The following is a 214-amino-acid chain: Orotate phosphoribosyltransferase (214 aa).

K26 serves as a coordination point for 5-phospho-alpha-D-ribose 1-diphosphate. Residue 34-35 coordinates orotate; it reads FF. 5-phospho-alpha-D-ribose 1-diphosphate is bound by residues 72-73, R99, K100, K103, H105, and 124-132; these read YK and DDVITAGTA. 2 residues coordinate orotate: T128 and R157.

It belongs to the purine/pyrimidine phosphoribosyltransferase family. PyrE subfamily. In terms of assembly, homodimer. Mg(2+) is required as a cofactor.

It carries out the reaction orotidine 5'-phosphate + diphosphate = orotate + 5-phospho-alpha-D-ribose 1-diphosphate. The protein operates within pyrimidine metabolism; UMP biosynthesis via de novo pathway; UMP from orotate: step 1/2. Its function is as follows. Catalyzes the transfer of a ribosyl phosphate group from 5-phosphoribose 1-diphosphate to orotate, leading to the formation of orotidine monophosphate (OMP). This Pseudomonas fluorescens (strain ATCC BAA-477 / NRRL B-23932 / Pf-5) protein is Orotate phosphoribosyltransferase.